Reading from the N-terminus, the 179-residue chain is Peptide deformylase (179 aa).

The Fe cation site is built by cysteine 102 and histidine 144. The active site involves glutamate 145. Position 148 (histidine 148) interacts with Fe cation.

Belongs to the polypeptide deformylase family. The cofactor is Fe(2+).

It catalyses the reaction N-terminal N-formyl-L-methionyl-[peptide] + H2O = N-terminal L-methionyl-[peptide] + formate. In terms of biological role, removes the formyl group from the N-terminal Met of newly synthesized proteins. Requires at least a dipeptide for an efficient rate of reaction. N-terminal L-methionine is a prerequisite for activity but the enzyme has broad specificity at other positions. The polypeptide is Peptide deformylase (Wolbachia pipientis subsp. Culex pipiens (strain wPip)).